The chain runs to 346 residues: Phosphoribosylformylglycinamidine cyclo-ligase (346 aa).

The protein belongs to the AIR synthase family.

The protein resides in the cytoplasm. It carries out the reaction 2-formamido-N(1)-(5-O-phospho-beta-D-ribosyl)acetamidine + ATP = 5-amino-1-(5-phospho-beta-D-ribosyl)imidazole + ADP + phosphate + H(+). It functions in the pathway purine metabolism; IMP biosynthesis via de novo pathway; 5-amino-1-(5-phospho-D-ribosyl)imidazole from N(2)-formyl-N(1)-(5-phospho-D-ribosyl)glycinamide: step 2/2. This chain is Phosphoribosylformylglycinamidine cyclo-ligase, found in Vibrio campbellii (strain ATCC BAA-1116).